The sequence spans 84 residues: uncharacterized protein (84 aa).

This is an uncharacterized protein from Escherichia coli O6:H1 (strain CFT073 / ATCC 700928 / UPEC).